The chain runs to 335 residues: Serpentine receptor class alpha-13 (335 aa).

Residues 1-22 lie on the Extracellular side of the membrane; that stretch reads MAIVSSENRTCADEKLLALYQS. Residues 23–43 form a helical membrane-spanning segment; the sequence is WSYIASIVFNCLVPTISTYFL. Over 44–61 the chain is Cytoplasmic; that stretch reads GRAIFQLCNQATIQYSTR. Residues 62–82 form a helical membrane-spanning segment; sequence ILLIATILFAACHQVSYFAFK. The Extracellular portion of the chain corresponds to 83 to 107; the sequence is IDLLHTMFFKLDQPCFLQRSSYDCR. A helical transmembrane segment spans residues 108-128; that stretch reads FISIAQTTGVVGMALTGLAMS. The Cytoplasmic segment spans residues 129 to 149; the sequence is TDRALALTFPADYHKLKSVPR. A helical membrane pass occupies residues 150-170; it reads VVLSVFVFIVSFSTWFLLTMN. Topologically, residues 171–192 are extracellular; that stretch reads DPLTGYLNHCGFYPSYSVANFQ. Residues 193–213 traverse the membrane as a helical segment; that stretch reads LMLDVILYLAIFNLIWDVILF. Over 214–235 the chain is Cytoplasmic; sequence YYARQQILWRRSYQFQKRYEAR. Residues 236–255 traverse the membrane as a helical segment; that stretch reads ISLNCTQAVFVISICQCISN. The Extracellular segment spans residues 256 to 278; sequence GANSGLMRLLMMIGTSITSVTYS. A helical transmembrane segment spans residues 279 to 299; it reads SLLSLFYTAPYSCILLPILMM. The Cytoplasmic segment spans residues 300-335; the sequence is RISEYIREQRTIGILSLRSEKPGLEEHHQRMRAAWS.

Belongs to the nematode receptor-like protein sra family.

Its subcellular location is the membrane. Functionally, chemosensory receptor that negatively regulates RAS/MAPK signaling during vulva induction and the negative regulation of olfaction of volitile attractants. Required for the suppression of vulval induction in response to food starvation. Signaling acts through the GPA-5 G-alpha protein subunit. In Caenorhabditis briggsae, this protein is Serpentine receptor class alpha-13.